Reading from the N-terminus, the 608-residue chain is Probable potassium transport system protein Kup (608 aa).

12 consecutive transmembrane segments (helical) span residues 9–29 (LSGV…TSPL), 46–66 (PAAI…VVSV), 99–119 (TPVL…EVVI), 137–157 (PSLD…LFAI), 165–185 (VGKL…VLGL), 213–233 (TSFF…ALYA), 247–267 (WFVV…ALLL), 285–305 (ALLP…QAVI), 337–357 (IYIP…IMSF), 363–383 (LAAA…ILFC), 396–416 (LVAA…AANL), and 419–439 (IFSG…LMTS).

Belongs to the HAK/KUP transporter (TC 2.A.72) family.

It is found in the cell inner membrane. It catalyses the reaction K(+)(in) + H(+)(in) = K(+)(out) + H(+)(out). Transport of potassium into the cell. Likely operates as a K(+):H(+) symporter. This is Probable potassium transport system protein Kup from Aeromonas salmonicida (strain A449).